A 287-amino-acid polypeptide reads, in one-letter code: Nucleotide-binding protein Asuc_0930 (287 aa).

Position 8–15 (8–15) interacts with ATP; the sequence is GRSGAGKS. 56-59 serves as a coordination point for GTP; sequence DIRN.

This sequence belongs to the RapZ-like family.

In terms of biological role, displays ATPase and GTPase activities. This is Nucleotide-binding protein Asuc_0930 from Actinobacillus succinogenes (strain ATCC 55618 / DSM 22257 / CCUG 43843 / 130Z).